Consider the following 465-residue polypeptide: Glutamate--tRNA ligase 2 (465 aa).

Positions 8–18 (PSPTGLMHLGN) match the 'HIGH' region motif. A 'KMSKS' region motif is present at residues 249 to 253 (PLSKR). Residue Lys252 coordinates ATP.

This sequence belongs to the class-I aminoacyl-tRNA synthetase family. Glutamate--tRNA ligase type 1 subfamily. As to quaternary structure, monomer.

Its subcellular location is the cytoplasm. The catalysed reaction is tRNA(Glu) + L-glutamate + ATP = L-glutamyl-tRNA(Glu) + AMP + diphosphate. Functionally, catalyzes the attachment of glutamate to tRNA(Glu) in a two-step reaction: glutamate is first activated by ATP to form Glu-AMP and then transferred to the acceptor end of tRNA(Glu). The protein is Glutamate--tRNA ligase 2 of Coxiella burnetii (strain RSA 331 / Henzerling II).